Here is a 387-residue protein sequence, read N- to C-terminus: Methyltransferase phomM' (387 aa).

A methyltransferase domain region spans residues 98 to 223 (PHRPKDLHIL…QSVADLFTTL (126 aa)).

Belongs to the class I-like SAM-binding methyltransferase superfamily. Erg6/SMT family.

It functions in the pathway mycotoxin biosynthesis. Methyltransferase; part of the gene cluster that mediates the biosynthesis of the phomopsins, a group of hexapeptide mycotoxins which infects lupins and causes lupinosis disease in livestock. Within the pathway, phomM' acts as an S-adenosylmethionine-dependent alpha-N-methyltransferase that catalyzes two successive N-methylation reactions, converting N-desmethyl-phomopsin A to phomopsin A and phomopsin A further to an N,N-dimethylated congener called phomopsin E. The pathway starts with the processing of the precursor phomA' by several endopeptidases including kexin proteases as well as the cluster-specific S41 family peptidase phomP1 and the oligopeptidase phomG' to produce 10 identical copies of the hexapeptide Tyr-Val-Ile-Pro-Ile-Asp. After being excised from the precursor peptide, the core peptides are cyclized and modified post-translationally by enzymes encoded within the gene cluster. The timing and order of proteolysis of the phomA' precursor and PTMs are still unknown. Two tyrosinase-like enzymes, phomQ1' and phomQ2, catalyze the chlorination and hydroxylation of Tyr, respectively. PhomYb, is proposed to be involved in the construction of the macrocyclic structure. The other 4 ustYa family proteins may be involved in PTMs that generate the unique structure of phomopsin A. PhomYa' is required for the hydroxylation of C-beta of Tyr. PhomYc', phomYd', and phomYe are responsible for the biosynthesis of 2,3-dehydroisoleucine (dIle), 2,3-dehydroaspartic acid (dAsp), and 3,4-dehydroproline (dPro), respectively. While dIle formation by phomYc' is indispensable for the installation of dAsp by phomYd', the order of the other PTMs have not been elucidated yet. Most of the biosynthetic enzymes likely have broad substrate specificity, and thus, there might be a metabolic grid from a precursor to phomopsin A. The enzyme(s) responsible for the biosynthesis of 3,4-dehydrovaline (dVal) have also not been identified yet. Finally, phomM' acts as an S-adenosylmethionine-dependent alpha-N-methyltransferase that catalyzes two successive N-methylation reactions, converting N-desmethyl-phomopsin A to phomopsin A and phomopsin A further to an N,N-dimethylated congener called phomopsin E. The protein is Methyltransferase phomM' of Diaporthe leptostromiformis (Lupinosis disease fungus).